Here is a 381-residue protein sequence, read N- to C-terminus: S-(hydroxymethyl)glutathione dehydrogenase (381 aa).

Cys-49 lines the Zn(2+) pocket. His-50 serves as a coordination point for NAD(+). Zn(2+)-binding residues include His-71, Glu-72, Cys-101, Cys-104, Cys-107, Cys-115, and Cys-178. Residues 203 to 208, Asp-227, and 298 to 300 contribute to the NAD(+) site; these read GGGIVG and IGV.

Belongs to the zinc-containing alcohol dehydrogenase family. Class-III subfamily. Zn(2+) is required as a cofactor.

It carries out the reaction a primary alcohol + NAD(+) = an aldehyde + NADH + H(+). The catalysed reaction is a secondary alcohol + NAD(+) = a ketone + NADH + H(+). The enzyme catalyses S-(hydroxymethyl)glutathione + NADP(+) = S-formylglutathione + NADPH + H(+). It catalyses the reaction S-(hydroxymethyl)glutathione + NAD(+) = S-formylglutathione + NADH + H(+). It carries out the reaction S-nitrosoglutathione + NADH + H(+) = S-(hydroxysulfenamide)glutathione + NAD(+). In terms of biological role, oxidizes long-chain alcohols and, in the presence of glutathione, is able to oxidize formaldehyde. Also acts as a S-nitroso-glutathione reductase by catalyzing the NADH-dependent reduction of S-nitrosoglutathione, thereby regulating protein S-nitrosylation. The polypeptide is S-(hydroxymethyl)glutathione dehydrogenase (FDH1) (Candida maltosa (Yeast)).